The chain runs to 244 residues: MSGHSFFEHLFEHSQHVTPYLHGAIKPRPERCAEHGFIHIEHASSDHIRALYESLKLAHPEAGAAYWLTRTWTLLCWQPLYVAFIAIYSCQGLPKLSSMGQHVQPRFVSGYQFDDDEYRQGSEQELIAHAGKELCALFDYFRQEMSLWTRIRPGFTQHLFADGVFGCLVKLSQFYPTLSGDYFLEQARLWLAACQLPEKLIQSLRYDETSRQLSLVRTSCCLVYKCQGRELCRDCPRHPDNKRE.

[2Fe-2S] cluster contacts are provided by Cys220, Cys221, Cys232, and Cys235.

Monomer. Requires [2Fe-2S] cluster as cofactor.

Its subcellular location is the cytoplasm. The enzyme catalyses 2 a Fe(II)-siderophore + NAD(+) + H(+) = 2 a Fe(III)-siderophore + NADH. It catalyses the reaction 2 a Fe(II)-siderophore + NADP(+) + H(+) = 2 a Fe(III)-siderophore + NADPH. In terms of biological role, ferric-siderophore reductase involved in iron removal from the siderophores after their transport into the cell. Acts as a major ferric-aerobactin reductase catalyzing the reduction of Fe(3+)-aerobactin, a citrate-hydroxamate siderophore produced by other bacteria. Catalyzes reduction of Fe(3+)-vulnibactin, a catecholate siderophore synthesized by V.vulnificus, in the absence of VuuB. Catalyzes reduction of ferrioxamine B and Fe(3+)-vibriobactin in vitro. No activity with Fe(3+)-enterobactin. Catalyzes reduction of ferric chelating compound Fe(3+)-nitrilotriacetic acid (NTA) in the presence of NADH, NADPH or reduced glutathione (GSH) as its electron donor in vitro. Also catalyzes reduction of ferric chelating compounds Fe(3+)-citrate and Fe(3+)-EDTA as well as non-complexed FeCl3 in the presence of GSH as its electron donor in vitro. Highest activity with Fe(3+)-NTA as electron acceptor and GSH as donor. This chain is Ferric aerobactin reductase IutB, found in Vibrio vulnificus.